We begin with the raw amino-acid sequence, 1503 residues long: Lysine-specific demethylase 5B-B (1503 aa).

The region spanning C15–P56 is the JmjN domain. The 91-residue stretch at T80–S170 folds into the ARID domain. Residues V202–A211 show a composition bias toward polar residues. Disordered regions lie at residues V202–S223 and I268–P287. Residues I268–S278 show a composition bias toward basic and acidic residues. Residues L295–Q345 form a PHD-type 1 zinc finger. The region spanning K439–R605 is the JmjC domain. Fe cation-binding residues include H485, D488, and H573. The segment at L1168–S1216 adopts a PHD-type 2 zinc-finger fold. 2 disordered regions span residues T1362–D1381 and E1403–E1442. A PHD-type 3 zinc finger spans residues M1444–S1497.

This sequence belongs to the JARID1 histone demethylase family. Requires Fe(2+) as cofactor.

The protein localises to the nucleus. The catalysed reaction is N(6),N(6),N(6)-trimethyl-L-lysyl(4)-[histone H3] + 3 2-oxoglutarate + 3 O2 = L-lysyl(4)-[histone H3] + 3 formaldehyde + 3 succinate + 3 CO2. Histone demethylase that demethylates 'Lys-4' of histone H3, thereby playing a central role in histone code. Does not demethylate histone H3 'Lys-9' or H3 'Lys-27'. Demethylates trimethylated, dimethylated and monomethylated H3 'Lys-4'. Acts as a transcriptional corepressor. The sequence is that of Lysine-specific demethylase 5B-B (kdm5bb) from Danio rerio (Zebrafish).